The primary structure comprises 88 residues: UPF0250 protein Ssed_3490 (88 aa).

It belongs to the UPF0250 family.

The sequence is that of UPF0250 protein Ssed_3490 from Shewanella sediminis (strain HAW-EB3).